The chain runs to 638 residues: MWPQARLPPHPAMAEETRQSKLAAAKRKLKEYWQRNSPGVPAGAKRNRKTNGSIHETATSGGCHSPGDSATGIHGESPTSSATLKDLESPCQELAVVPDSRSVKVSQLKNTIKSLKQQKKQVVHQLEEEKKANNEKQKAERELEVQIQRLNIQKGKLNTDLYHTKRSLRYFEEESKDLAVRLQHSLQRKGELERALSAVTATQKKKAERQFSSRSKARTEWKLEQSMREQALLKAQLTQLKESLKEVQLERDEYAEHLKGERARWQQRMRKMSQEVCSLKKEKKHDKYRVETLERSLSKLKNQMAEPLPPEPPAVPSEAELQHLRKELERVAGALQAQVEYNQRISLLNEGQKERLREQQERLPEQEERLQQLAEPQNSFKELNNENKSVLQLEQQVKELQEKLGKERLEAASQQKQQLTAQLSLMALPGEGDGGGHLDSEGEEAPRPIPSIPQDLESREAMSSFMDHLEEKADLSELVKKQELRFIQYWQERCHQKIHHLLSEPGGRAKDAALGGGHHQAGAQGGDEDEAAGAAADGIAAYSNYNNGHRKFLAAAHNPADEPGPGAPAPQELGAADKHGDLCEVSLTSSAQGEAREDPLLDKPTAQPIVQDHQEHPGLGNNCCVPFFCWAWLPRRRR.

The span at 1–11 shows a compositional bias: pro residues; sequence MWPQARLPPHP. The interval 1–84 is disordered; that stretch reads MWPQARLPPH…GESPTSSATL (84 aa). A compositionally biased stretch (polar residues) spans 50-62; it reads TNGSIHETATSGG. 3 coiled-coil regions span residues 105–160, 223–275, and 318–417; these read VSQL…LNTD, LEQS…MSQE, and EAEL…QQKQ. Disordered stretches follow at residues 427-453, 510-532, and 556-575; these read ALPGEGDGGGHLDSEGEEAPRPIPSIP, KDAALGGGHHQAGAQGGDEDEAA, and AHNPADEPGPGAPAPQELGA. The segment covering 434-446 has biased composition (basic and acidic residues); sequence GGGHLDSEGEEAP. Residues 514–525 are compositionally biased toward gly residues; that stretch reads LGGGHHQAGAQG. The segment covering 561–574 has biased composition (low complexity); it reads DEPGPGAPAPQELG.

This sequence belongs to the GOLGA8 family.

The protein is Golgin subfamily A member 8S of Homo sapiens (Human).